We begin with the raw amino-acid sequence, 119 residues long: Phytosulfokines 2 (119 aa).

Positions methionine 1–alanine 34 are cleaved as a signal peptide. Residues alanine 35–aspartate 109 constitute a propeptide that is removed on maturation. A sulfotyrosine mark is found at tyrosine 110 and tyrosine 112. Residues histidine 115–proline 119 constitute a propeptide that is removed on maturation.

Belongs to the phytosulfokine family. Post-translationally, sulfation is important for activity and for the binding to a putative membrane receptor. In terms of processing, PSK-alpha is produced by endopeptidase digestion. PSK-beta is produced from PSK-alpha by exopeptidase digestion.

Its subcellular location is the secreted. Promotes plant cell differentiation, organogenesis and somatic embryogenesis as well as cell proliferation. The sequence is that of Phytosulfokines 2 (PSK2) from Oryza sativa subsp. indica (Rice).